We begin with the raw amino-acid sequence, 246 residues long: UPF0758 protein SSU98_1084 (246 aa).

Residues 103-225 enclose the MPN domain; the sequence is RILGSEKLGR…YYSFREESDV (123 aa). Residues histidine 174, histidine 176, and aspartate 187 each coordinate Zn(2+). A JAMM motif motif is present at residues 174 to 187; that stretch reads HNHPSGSVQPSRND.

This sequence belongs to the UPF0758 family.

This chain is UPF0758 protein SSU98_1084, found in Streptococcus suis (strain 98HAH33).